Consider the following 218-residue polypeptide: Thiopurine S-methyltransferase (218 aa).

S-adenosyl-L-methionine contacts are provided by Trp-10, Leu-45, Glu-66, and Arg-123.

It belongs to the class I-like SAM-binding methyltransferase superfamily. TPMT family.

It is found in the cytoplasm. It carries out the reaction S-adenosyl-L-methionine + a thiopurine = S-adenosyl-L-homocysteine + a thiopurine S-methylether.. This chain is Thiopurine S-methyltransferase, found in Pseudomonas paraeruginosa (strain DSM 24068 / PA7) (Pseudomonas aeruginosa (strain PA7)).